A 174-amino-acid chain; its full sequence is uncharacterized protein (174 aa).

The N-acetyltransferase domain occupies 42–174; that stretch reads SSNKNINLYE…GVKGMFWYPR (133 aa).

The protein belongs to the acetyltransferase family. Ycf52 subfamily.

Its subcellular location is the plastid. It localises to the chloroplast. This is an uncharacterized protein from Pyropia yezoensis (Susabi-nori).